The primary structure comprises 233 residues: Large ribosomal subunit protein bL19c (233 aa).

A chloroplast-targeting transit peptide spans 1–77 (MASKVLPQAL…FPARNSFVVR (77 aa)).

In terms of assembly, component of the chloroplast large ribosomal subunit (LSU). Mature 70S chloroplast ribosomes of higher plants consist of a small (30S) and a large (50S) subunit. The 30S small subunit contains 1 molecule of ribosomal RNA (16S rRNA) and 24 different proteins. The 50S large subunit contains 3 rRNA molecules (23S, 5S and 4.5S rRNA) and 33 different proteins.

The protein localises to the plastid. The protein resides in the chloroplast. In terms of biological role, component of the chloroplast ribosome (chloro-ribosome), a dedicated translation machinery responsible for the synthesis of chloroplast genome-encoded proteins, including proteins of the transcription and translation machinery and components of the photosynthetic apparatus. This Spinacia oleracea (Spinach) protein is Large ribosomal subunit protein bL19c (RPL19).